We begin with the raw amino-acid sequence, 502 residues long: MLSILFDDPARTSSGALLIVGILLLRWALWPAPSSHWPLVNGKRWFEITTTKSKDRFVANGKDILLSSFKRLSKGFRLGTDNGPMIILSPEYVDEFRSEDRLCPVKFQAELAHTHLPGFEILSDKHVPKSVFTDFILRKLTPAIDSTAPASVTRLREALESTWTNSSEWHQIDLHSSVQVLSHTTTSPIFVGPELSSSKAWEELTYRYVGNFPVVACSLRLWPKFSQRFVNMILPSCTSLRKDVNQARQMVNEVLQKRAASQAARISQGLEPEKFSDGLQWWQELSGPPCDPACLQLALIFSAVHSTVDLLSQTILNLAERPELVDELRQEIIAVRESQPWGKAAFYKLGLMDSVLKETQRLKPVSIATEDVTFSDGLVIPKGSLVMMSCHNMREDSVTYPNPLEFDGHRFRKMRESPTNGAMAHLVSSSQHHMGFGIGTHSCPGRFFIAAGLKLTLSQILLNYDLRLSDPSENVTQNQGLFLMPNFKAKVEVRRREPEIEL.

The chain crosses the membrane as a helical span at residues 14-30 (SGALLIVGILLLRWALW). An N-linked (GlcNAc...) asparagine glycan is attached at N165. C443 is a heme binding site. Residue N474 is glycosylated (N-linked (GlcNAc...) asparagine).

This sequence belongs to the cytochrome P450 family. The cofactor is heme.

Its subcellular location is the membrane. The protein operates within secondary metabolite biosynthesis; terpenoid biosynthesis. In terms of biological role, cytochrome P450 monooxygenase; part of the gene cluster that mediates the biosynthesis of paraherquonin, a meroterpenoid with a unique, highly congested hexacyclic molecular architecture. The first step of the pathway is the synthesis of 3,5-dimethylorsellinic acid (DMOA) by the polyketide synthase prhL. Synthesis of DMOA is followed by farnesylation by the prenyltransferase prhE, methylesterification by the methyl-transferase prhM, epoxidation of the prenyl chain by the flavin-dependent monooxygenase prhF, and cyclization of the farnesyl moiety by the terpene cyclase prhH, to yield the tetracyclic intermediate, protoaustinoid A. The short chain dehydrogenase prhI then oxidizes the C-3 alcohol group of the terpene cyclase product to transform protoaustinoid A into protoaustinoid B. The FAD-binding monooxygenase prhJ catalyzes the oxidation of protoaustinoid B into preaustinoid A which is further oxidized into preaustinoid A1 by FAD-binding monooxygenase phrK. Finally, prhA leads to berkeleydione via the berkeleyone B intermediate. PrhA is a multifunctional dioxygenase that first desaturates at C5-C6 to form berkeleyone B, followed by rearrangement of the A/B-ring to form the cycloheptadiene moiety in berkeleydione. Berkeleydione serves as the key intermediate for the biosynthesis of paraherquonin as well as many other meroterpenoids. The cytochrome P450 monooxygenases prhB, prhD, and prhN, as well as the isomerase prhC, are probably involved in the late stage of paraherquonin biosynthesis, after the production of berkeleydione. Especially prhC might be a multifunctional enzyme that catalyzes the D-ring expansion via intramolecular methoxy rearrangement, as well as the hydrolysis of the expanded D-ring. This Penicillium brasilianum protein is Cytochrome P450 monooxygenase prhN.